A 777-amino-acid polypeptide reads, in one-letter code: Isoamylase (777 aa).

The first 32 residues, 1 to 32 (MDPHAPQRQRSGQRLRALALAALACALSPAHA), serve as a signal peptide directing secretion. Ca(2+)-binding residues include Asp162, Glu263, Thr264, Asn266, and Asp293. Asp410 serves as the catalytic Nucleophile. Residues Cys419 and Cys423 are joined by a disulfide bond. Glu458 (proton donor) is an active-site residue.

Belongs to the glycosyl hydrolase 13 family. In terms of assembly, monomer. It depends on Ca(2+) as a cofactor.

The catalysed reaction is Hydrolysis of (1-&gt;6)-alpha-D-glucosidic branch linkages in glycogen, amylopectin and their beta-limit dextrins.. In terms of biological role, has a high rate of hydrolysis for glycogen. Does not cleave pullulan. In Flavobacterium sp, this protein is Isoamylase (iam).